We begin with the raw amino-acid sequence, 2101 residues long: General transcription factor 3C polypeptide 1 (2101 aa).

The span at 473 to 487 shows a compositional bias: acidic residues; it reads GEEAFLSDSESEEES. Disordered regions lie at residues 473–574 and 588–609; these read GEEA…MDSH and NPKE…DKPH. Basic residues predominate over residues 492–503; the sequence is GKRRGRGSRGHA. The segment covering 504–513 has biased composition (low complexity); it reads RASGDAGSGS. A Glycyl lysine isopeptide (Lys-Gly) (interchain with G-Cter in SUMO2) cross-link involves residue Lys534. Position 667 is a phosphoserine (Ser667). Disordered regions lie at residues 718–772 and 820–864; these read STAN…EKMG and GEQP…SSWE. Positions 747-759 are enriched in polar residues; the sequence is RSANSDPNTSSKP. Basic and acidic residues-rich tracts occupy residues 760–771 and 826–836; these read ESTRVKKTDEKM and HSERKTGKQES. Residues Lys770 and Lys833 each participate in a glycyl lysine isopeptide (Lys-Gly) (interchain with G-Cter in SUMO2) cross-link. At Ser1063 the chain carries Phosphoserine. Basic and acidic residues predominate over residues 1186-1196; that stretch reads EEQFELDREPT. Disordered regions lie at residues 1186–1239, 1598–1627, and 1822–1923; these read EEQF…KKLR, KSLG…QGVE, and DTKA…QENQ. Position 1196 is a phosphothreonine (Thr1196). Residues 1199–1215 are compositionally biased toward basic residues; it reads RNRKVRGGKSQKRKRLK. Residues 1229 to 1239 show a composition bias toward basic and acidic residues; that stretch reads EHPEAKSKKLR. Residues 1606 to 1617 are compositionally biased toward acidic residues; that stretch reads LDDDEEEEDLDE. A compositionally biased stretch (basic and acidic residues) spans 1822–1831; the sequence is DTKASGDDSQ. A phosphoserine mark is found at Ser1854 and Ser1890. Over residues 1900–1910 the composition is skewed to low complexity; the sequence is EAQAPAQLAAP.

This sequence belongs to the TFIIIC subunit 1 family. Part of the TFIIIC subcomplex TFIIIC2, consisting of six subunits, GTF3C1, GTF3C2, GTF3C3, GTF3C4, GTF3C5 and GTF3C6. Interacts with IGHMBP2. Interacts with MAF1.

The protein resides in the nucleus. Required for RNA polymerase III-mediated transcription. Component of TFIIIC that initiates transcription complex assembly on tRNA and is required for transcription of 5S rRNA and other stable nuclear and cytoplasmic RNAs. Binds to the box B promoter element. This chain is General transcription factor 3C polypeptide 1 (Gtf3c1), found in Mus musculus (Mouse).